A 367-amino-acid chain; its full sequence is Succinyl-diaminopimelate desuccinylase (367 aa).

Zn(2+) is bound at residue His64. The active site involves Asp66. Residue Asp95 participates in Zn(2+) binding. Glu125 acts as the Proton acceptor in catalysis. Residues Glu126, Glu154, and His339 each coordinate Zn(2+).

It belongs to the peptidase M20A family. DapE subfamily. As to quaternary structure, homodimer. The cofactor is Zn(2+). Co(2+) is required as a cofactor.

It carries out the reaction N-succinyl-(2S,6S)-2,6-diaminopimelate + H2O = (2S,6S)-2,6-diaminopimelate + succinate. It functions in the pathway amino-acid biosynthesis; L-lysine biosynthesis via DAP pathway; LL-2,6-diaminopimelate from (S)-tetrahydrodipicolinate (succinylase route): step 3/3. Catalyzes the hydrolysis of N-succinyl-L,L-diaminopimelic acid (SDAP), forming succinate and LL-2,6-diaminopimelate (DAP), an intermediate involved in the bacterial biosynthesis of lysine and meso-diaminopimelic acid, an essential component of bacterial cell walls. The protein is Succinyl-diaminopimelate desuccinylase of Sulfurovum sp. (strain NBC37-1).